Reading from the N-terminus, the 352-residue chain is Putative [LysW]-L-2-aminoadipate 6-phosphate reductase (352 aa).

11-14 provides a ligand contact to NADP(+); that stretch reads SGYT. C148 is an active-site residue. N319 contributes to the NADP(+) binding site.

This sequence belongs to the NAGSA dehydrogenase family. Type 1 subfamily. LysY sub-subfamily.

Its subcellular location is the cytoplasm. The enzyme catalyses [amino-group carrier protein]-C-terminal-N-(1-carboxy-5-oxopentan-1-yl)-L-glutamine + phosphate + NADP(+) = [amino-group carrier protein]-C-terminal-N-(1-carboxy-5-phosphooxy-5-oxopentan-1-yl)-L-glutamine + NADPH + H(+). It functions in the pathway amino-acid biosynthesis; L-lysine biosynthesis via AAA pathway; L-lysine from L-alpha-aminoadipate (Thermus route): step 3/5. Functionally, catalyzes the NADPH-dependent reduction of [LysW]-aminoadipate 6-phosphate to yield [LysW]-aminoadipate 6-semialdehyde. The sequence is that of Putative [LysW]-L-2-aminoadipate 6-phosphate reductase from Thermomicrobium roseum (strain ATCC 27502 / DSM 5159 / P-2).